The following is a 250-amino-acid chain: Kv channel-interacting protein 4 (250 aa).

Residues 2 to 44 (NVRRVESISAQLEEASSTGGFLYAQNNTKRSIKERLMKLLPCS) form a KIS region. Residues serine 17 and serine 56 each carry the phosphoserine modification. An EF-hand 1; degenerate domain is found at 61–117 (LEMATVRHRPEALELLEAQSKFTKKELQILYRGFKNECPSGVVNEETFKEIYSQFFP). 3 consecutive EF-hand domains span residues 120-155 (DSTT…LLRG), 156-191 (TVQE…IYDM), and 204-239 (APRQ…DENI). Aspartate 133, aspartate 135, asparagine 137, aspartate 144, aspartate 169, asparagine 171, aspartate 173, tyrosine 175, glutamate 180, aspartate 217, asparagine 219, aspartate 221, and glutamate 228 together coordinate Ca(2+). Positions 237–250 (ENIMRSMQLFENVI) are interaction with KCND2.

The protein belongs to the recoverin family. In terms of assembly, component of heteromultimeric potassium channels. Identified in potassium channel complexes containing KCND1, KCND2, KCND3, KCNIP1, KCNIP2, KCNIP3, KCNIP4, DPP6 and DPP10. Interacts with the C-terminus of PSEN2 and probably PSEN1. Interacts with KCND2 and KCND3. Expressed in brain. Highly expressed by neurons in layers II-IV of cortex and in hippocampus, thalamus and the Purkinje cell layer of the cerebellum.

It is found in the cell membrane. The protein resides in the cytoplasm. The protein localises to the peroxisome. Its function is as follows. Regulatory subunit of Kv4/D (Shal)-type voltage-gated rapidly inactivating A-type potassium channels, such as KCND2/Kv4.2 and KCND3/Kv4.3. Modulates channel expression at the cell membrane, gating characteristics, inactivation kinetics and rate of recovery from inactivation in a calcium-dependent and isoform-specific manner. The polypeptide is Kv channel-interacting protein 4 (Kcnip4) (Mus musculus (Mouse)).